The following is a 291-amino-acid chain: 33 kDa chaperonin (291 aa).

2 disulfides stabilise this stretch: C229/C231 and C262/C265.

Belongs to the HSP33 family. Under oxidizing conditions two disulfide bonds are formed involving the reactive cysteines. Under reducing conditions zinc is bound to the reactive cysteines and the protein is inactive.

The protein localises to the cytoplasm. Redox regulated molecular chaperone. Protects both thermally unfolding and oxidatively damaged proteins from irreversible aggregation. Plays an important role in the bacterial defense system toward oxidative stress. In Aliivibrio salmonicida (strain LFI1238) (Vibrio salmonicida (strain LFI1238)), this protein is 33 kDa chaperonin.